The following is a 188-amino-acid chain: Ribosome-recycling factor (188 aa).

It belongs to the RRF family.

It is found in the cytoplasm. Functionally, responsible for the release of ribosomes from messenger RNA at the termination of protein biosynthesis. May increase the efficiency of translation by recycling ribosomes from one round of translation to another. This is Ribosome-recycling factor from Blochmanniella floridana.